The following is a 307-amino-acid chain: Homoserine kinase (307 aa).

Position 95 to 105 (95 to 105 (PQSRGLGSSAS)) interacts with ATP.

This sequence belongs to the GHMP kinase family. Homoserine kinase subfamily.

It is found in the cytoplasm. It carries out the reaction L-homoserine + ATP = O-phospho-L-homoserine + ADP + H(+). It participates in amino-acid biosynthesis; L-threonine biosynthesis; L-threonine from L-aspartate: step 4/5. In terms of biological role, catalyzes the ATP-dependent phosphorylation of L-homoserine to L-homoserine phosphate. This Corynebacterium aurimucosum (strain ATCC 700975 / DSM 44827 / CIP 107346 / CN-1) (Corynebacterium nigricans) protein is Homoserine kinase.